Here is a 44-residue protein sequence, read N- to C-terminus: Peptide Hact-4 (44 aa).

3 disulfide bridges follow: Cys8/Cys42, Cys15/Cys34, and Cys20/Cys43.

As to expression, expressed in tentacles.

Its subcellular location is the nematocyst. The protein localises to the secreted. In terms of biological role, peptide with unknown function. Does not exhibit antimicrobial activity against Escherichia coli and Staphylococcus aureus. Does not exhibit any effect on human ion channel TRPV1 in a Xenopus laevis oocytes assay. This chain is Peptide Hact-4, found in Heliofungia actiniformis (Mushroom coral).